Reading from the N-terminus, the 104-residue chain is Complex III assembly factor LYRM7 (104 aa).

A coiled-coil region spans residues 21–48; sequence VFQNDHRALEAARQRINEEFKKNKRECS.

This sequence belongs to the complex I LYR family. In terms of assembly, interacts with UQCRFS1.

Its subcellular location is the mitochondrion matrix. In terms of biological role, assembly factor required for Rieske Fe-S protein UQCRFS1 incorporation into the cytochrome b-c1 (CIII) complex. Functions as a chaperone, binding to this subunit within the mitochondrial matrix and stabilizing it prior to its translocation and insertion into the late CIII dimeric intermediate within the mitochondrial inner membrane. The protein is Complex III assembly factor LYRM7 (lyrm7) of Xenopus laevis (African clawed frog).